Here is a 622-residue protein sequence, read N- to C-terminus: Probable E3 ubiquitin-protein ligase DTX2 (622 aa).

2 consecutive WWE domains span residues 8 to 97 and 98 to 174; these read SLVQ…AVRR and HLFP…SVRR. Asymmetric dimethylarginine occurs at positions 213, 215, and 233. Lys-249 carries the N6-acetyllysine modification. Disordered regions lie at residues 249–324 and 355–393; these read KPSL…VPMQ and APQP…EPEP. Position 256 is an omega-N-methylarginine (Arg-256). Residues 274 to 285 are compositionally biased toward polar residues; that stretch reads LGSQPLYRSSLS. Low complexity predominate over residues 299–322; sequence SGAVSASLPSGPSSSPGSVPATVP. Position 360 is a phosphoserine (Ser-360). Basic residues predominate over residues 372–381; sequence GSVKRLRKMS. The RING-type zinc finger occupies 412–473; that stretch reads CIICMEKLST…DGSLQCPSCK (62 aa).

The protein belongs to the Deltex family. Homodimer. May form a heterodimer with other members of the Deltex family. Interacts with NOTCH1.

Its subcellular location is the cytoplasm. It is found in the nucleus. It catalyses the reaction S-ubiquitinyl-[E2 ubiquitin-conjugating enzyme]-L-cysteine + [acceptor protein]-L-lysine = [E2 ubiquitin-conjugating enzyme]-L-cysteine + N(6)-ubiquitinyl-[acceptor protein]-L-lysine.. Its pathway is protein modification; protein ubiquitination. Regulator of Notch signaling, a signaling pathway involved in cell-cell communications that regulates a broad spectrum of cell-fate determinations. Probably acts both as a positive and negative regulator of Notch, depending on the developmental and cell context. Mediates the antineural activity of Notch, possibly by inhibiting the transcriptional activation mediated by MATCH1. Functions as a ubiquitin ligase protein in vitro, suggesting that it may regulate the Notch pathway via some ubiquitin ligase activity. The protein is Probable E3 ubiquitin-protein ligase DTX2 (DTX2) of Homo sapiens (Human).